A 474-amino-acid chain; its full sequence is MSIQAPPRLLELAGQSLLRDQALSISAMEELPRVLYLPLFMEAFRRRHFQTLTVMVQAWPFTCLPLGSLMKTLHLETLKALLEGLHMLLTQKDRPRRWKLQVLDLRDVDENFWARWPGAWALSCFPETMSKRQTAEDCPRMGEHQPLKVFIDICLKEIPQDECLRYLFQWVYQRRGLVHLCCSKLVNYLTPIKHLRKSLKIIYLNSIQQLEIRNMSWPRLIRKLRCYLKEMKNLRKLVFSRCHHSMSDNELEGRLVTKFSSVFLRLEHLQLLKIKLITFFSGHLEQLIRCLQNPLENLELTYGYLLEEDMKCLSQYPSLGYLKHLNLSYVLLFRISLEPLGALLEKIAASLETLILEGCQIHYSQLSAILPGLSHCSQLTTFYFGRNCMSMGALKDLLCHTSGLSKLSLETYPAPEESLNSLVRVDWEIFALLRAELMCTLREVRQPKRIFIGPTPCPSCGSSPSEELELHLCC.

LRR repeat units follow at residues 15–38 (QSLL…LYLP), 204–229 (LNSI…CYLK), 271–294 (LLKI…LQNP), 319–342 (LGYL…PLGA), and 391–414 (MGAL…TYPA).

It belongs to the PRAME family.

This Homo sapiens (Human) protein is PRAME family member 14.